The following is a 326-amino-acid chain: tRNA-modifying protein YgfZ (326 aa).

Residues Trp27 and Trp189 each contribute to the folate site.

This sequence belongs to the tRNA-modifying YgfZ family.

It is found in the cytoplasm. Its function is as follows. Folate-binding protein involved in regulating the level of ATP-DnaA and in the modification of some tRNAs. It is probably a key factor in regulatory networks that act via tRNA modification, such as initiation of chromosomal replication. The chain is tRNA-modifying protein YgfZ from Escherichia coli O6:K15:H31 (strain 536 / UPEC).